Here is a 309-residue protein sequence, read N- to C-terminus: Porphobilinogen deaminase (309 aa).

The residue at position 242 (cysteine 242) is an S-(dipyrrolylmethanemethyl)cysteine.

It belongs to the HMBS family. In terms of assembly, monomer. Requires dipyrromethane as cofactor.

The catalysed reaction is 4 porphobilinogen + H2O = hydroxymethylbilane + 4 NH4(+). The protein operates within porphyrin-containing compound metabolism; protoporphyrin-IX biosynthesis; coproporphyrinogen-III from 5-aminolevulinate: step 2/4. Functionally, tetrapolymerization of the monopyrrole PBG into the hydroxymethylbilane pre-uroporphyrinogen in several discrete steps. In Pseudoalteromonas atlantica (strain T6c / ATCC BAA-1087), this protein is Porphobilinogen deaminase.